Here is a 788-residue protein sequence, read N- to C-terminus: 5-methyltetrahydropteroyltriglutamate--homocysteine methyltransferase (788 aa).

5-methyltetrahydropteroyltri-L-glutamate is bound by residues 24–27 (RELK) and lysine 140. L-homocysteine is bound by residues 463-465 (IGS) and glutamate 516. L-methionine-binding positions include 463–465 (IGS) and glutamate 516. 5-methyltetrahydropteroyltri-L-glutamate-binding positions include 547-548 (RC) and tryptophan 593. Aspartate 631 provides a ligand contact to L-homocysteine. Aspartate 631 is a binding site for L-methionine. Glutamate 637 is a binding site for 5-methyltetrahydropteroyltri-L-glutamate. Residues histidine 673, cysteine 675, and glutamate 697 each coordinate Zn(2+). The active-site Proton donor is histidine 726. Cysteine 758 contacts Zn(2+).

It belongs to the vitamin-B12 independent methionine synthase family. Requires Zn(2+) as cofactor.

The enzyme catalyses 5-methyltetrahydropteroyltri-L-glutamate + L-homocysteine = tetrahydropteroyltri-L-glutamate + L-methionine. The protein operates within amino-acid biosynthesis; L-methionine biosynthesis via de novo pathway; L-methionine from L-homocysteine (MetE route): step 1/1. Functionally, catalyzes the transfer of a methyl group from 5-methyltetrahydrofolate to homocysteine resulting in methionine formation. The sequence is that of 5-methyltetrahydropteroyltriglutamate--homocysteine methyltransferase from Rhodopseudomonas palustris (strain ATCC BAA-98 / CGA009).